The primary structure comprises 208 residues: WEB family protein At2g17940 (208 aa).

A coiled-coil region spans residues 78-113; the sequence is RTLQLNTSLSNRIKTLTQELELGKKEIQRLSRTRSS.

It belongs to the WEB family.

The chain is WEB family protein At2g17940 from Arabidopsis thaliana (Mouse-ear cress).